Here is a 382-residue protein sequence, read N- to C-terminus: Na(+)/H(+) antiporter NhaA (382 aa).

The next 10 membrane-spanning stretches (helical) occupy residues 5–25 (INLL…ALAW), 42–62 (FGGV…FFGI), 88–108 (LATL…NAVI), 116–136 (GWGI…RLVF), 145–165 (FLLL…AVFY), 169–189 (VHPT…AAYI), 261–281 (IVVD…RFSS), 282–302 (VGTA…AGIL), 327–347 (TGLV…VAFV), and 353–373 (GAAK…VALG).

This sequence belongs to the NhaA Na(+)/H(+) (TC 2.A.33) antiporter family.

It localises to the cell inner membrane. It carries out the reaction Na(+)(in) + 2 H(+)(out) = Na(+)(out) + 2 H(+)(in). Functionally, na(+)/H(+) antiporter that extrudes sodium in exchange for external protons. The chain is Na(+)/H(+) antiporter NhaA from Geobacter metallireducens (strain ATCC 53774 / DSM 7210 / GS-15).